Here is a 347-residue protein sequence, read N- to C-terminus: Gas vesicle ATPase GvpN (347 aa).

The disordered stretch occupies residues 1 to 50 (MTNSSRERKVRGSQIRTSRREKQDKNARNRTEKELTRLENHQTHRTKNGT). Positions 18–42 (SRREKQDKNARNRTEKELTRLENHQ) are enriched in basic and acidic residues. 91–98 (GPTGCGKT) is a binding site for ATP.

The protein belongs to the CbbQ/NirQ/NorQ/GpvN family. In terms of assembly, forms homodimers, a GvpN-GvpO heterodimer, interacts with GvpC and GvpL, might interact with GvpA.

It is found in the gas vesicle. It localises to the cytoplasm. It catalyses the reaction ATP + H2O = ADP + phosphate + H(+). Its function is as follows. An ATPase that functions in gas vesicle formation. A minor component of the gas vesicle, also found in soluble extracts. Gas vesicles are hollow, gas filled proteinaceous nanostructures found in some microorganisms. They allow positioning of halobacteria at the optimal depth for growth in the poorly aerated, shallow brine pools of their habitat. In terms of biological role, expression of a 9.5 kb mc-vac DNA fragment containing 2 divergently transcribed regions (gvpD-gvpE-gvpF-gvpG-gvpH-gvpI-gvpJ-gvpK-gvpL-gvpM and gvpA-gvpC-gvpN-gvpO) allows H.volcanii to produce gas vesicles. The polypeptide is Gas vesicle ATPase GvpN (Haloferax mediterranei (strain ATCC 33500 / DSM 1411 / JCM 8866 / NBRC 14739 / NCIMB 2177 / R-4) (Halobacterium mediterranei)).